A 289-amino-acid polypeptide reads, in one-letter code: Deoxyuridine 5'-triphosphate nucleotidohydrolase (289 aa).

Substrate-binding positions include 176 to 178 and 283 to 284; these read RSG and FG.

The protein belongs to the dUTPase family. It depends on Mg(2+) as a cofactor.

It carries out the reaction dUTP + H2O = dUMP + diphosphate + H(+). In terms of biological role, involved in nucleotide metabolism: produces dUMP, the immediate precursor of thymidine nucleotides and decreases the intracellular concentration of dUTP to avoid uracil incorporation into viral DNA. The protein is Deoxyuridine 5'-triphosphate nucleotidohydrolase of Equus caballus (Horse).